The sequence spans 153 residues: 6,7-dimethyl-8-ribityllumazine synthase (153 aa).

5-amino-6-(D-ribitylamino)uracil is bound by residues Phe-21, 55-57 (AFE), and 79-81 (TVI). Residue 84–85 (AT) participates in (2S)-2-hydroxy-3-oxobutyl phosphate binding. His-87 acts as the Proton donor in catalysis. Residue Phe-112 participates in 5-amino-6-(D-ribitylamino)uracil binding. Residue Arg-126 participates in (2S)-2-hydroxy-3-oxobutyl phosphate binding.

This sequence belongs to the DMRL synthase family. As to quaternary structure, forms an icosahedral capsid composed of 60 subunits, arranged as a dodecamer of pentamers.

The catalysed reaction is (2S)-2-hydroxy-3-oxobutyl phosphate + 5-amino-6-(D-ribitylamino)uracil = 6,7-dimethyl-8-(1-D-ribityl)lumazine + phosphate + 2 H2O + H(+). It participates in cofactor biosynthesis; riboflavin biosynthesis; riboflavin from 2-hydroxy-3-oxobutyl phosphate and 5-amino-6-(D-ribitylamino)uracil: step 1/2. Functionally, catalyzes the formation of 6,7-dimethyl-8-ribityllumazine by condensation of 5-amino-6-(D-ribitylamino)uracil with 3,4-dihydroxy-2-butanone 4-phosphate. This is the penultimate step in the biosynthesis of riboflavin. This Bacillus cereus (strain B4264) protein is 6,7-dimethyl-8-ribityllumazine synthase.